The chain runs to 1103 residues: Mediator of RNA polymerase II transcription subunit 14 (1103 aa).

3 disordered regions span residues 1–63 (MPGV…GYKQ), 120–140 (VPPQ…LGNQ), and 1054–1103 (LETK…ITID). Positions 1073 to 1103 (SGNTVQNARLENKSPQKAAATHSNADVITID) are enriched in polar residues.

It belongs to the Mediator complex subunit 14 family. In terms of assembly, component of the Mediator complex.

The protein resides in the nucleus. In terms of biological role, component of the Mediator complex, a coactivator involved in the regulated transcription of nearly all RNA polymerase II-dependent genes. Mediator functions as a bridge to convey information from gene-specific regulatory proteins to the basal RNA polymerase II transcription machinery. Mediator is recruited to promoters by direct interactions with regulatory proteins and serves as a scaffold for the assembly of a functional preinitiation complex with RNA polymerase II and the general transcription factors. This Aspergillus terreus (strain NIH 2624 / FGSC A1156) protein is Mediator of RNA polymerase II transcription subunit 14 (rgr1).